The sequence spans 254 residues: Precorrin-3B C(17)-methyltransferase (254 aa).

This sequence belongs to the precorrin methyltransferase family.

It carries out the reaction precorrin-3B + S-adenosyl-L-methionine = precorrin-4 + S-adenosyl-L-homocysteine + 3 H(+). The protein operates within cofactor biosynthesis; adenosylcobalamin biosynthesis; cob(II)yrinate a,c-diamide from precorrin-2 (aerobic route): step 3/10. In terms of biological role, methyltransferase that catalyzes the methylation of C-17 in precorrin-3B to form precorrin-4. This is Precorrin-3B C(17)-methyltransferase (cobJ) from Sinorhizobium sp.